The chain runs to 151 residues: uncharacterized protein (151 aa).

This is an uncharacterized protein from Lepidoptera (butterflies and moths).